We begin with the raw amino-acid sequence, 389 residues long: Probable acyl-CoA dehydrogenase fadE25 (389 aa).

The protein belongs to the acyl-CoA dehydrogenase family. It depends on FAD as a cofactor.

It catalyses the reaction a 2,3-saturated acyl-CoA + A = a 2,3-dehydroacyl-CoA + AH2. The polypeptide is Probable acyl-CoA dehydrogenase fadE25 (fadE25) (Mycobacterium bovis (strain ATCC BAA-935 / AF2122/97)).